A 73-amino-acid chain; its full sequence is DNA-directed RNA polymerase subunit omega (73 aa).

This sequence belongs to the RNA polymerase subunit omega family. In cyanobacteria the RNAP catalytic core is composed of 2 alpha, 1 beta, 1 beta', 1 gamma and 1 omega subunit. When a sigma factor is associated with the core the holoenzyme is formed, which can initiate transcription.

The catalysed reaction is RNA(n) + a ribonucleoside 5'-triphosphate = RNA(n+1) + diphosphate. Functionally, promotes RNA polymerase assembly. Latches the N- and C-terminal regions of the beta' subunit thereby facilitating its interaction with the beta and alpha subunits. The sequence is that of DNA-directed RNA polymerase subunit omega from Gloeobacter violaceus (strain ATCC 29082 / PCC 7421).